Here is a 122-residue protein sequence, read N- to C-terminus: Putative protein adenylyltransferase MJ1547 (122 aa).

A GSX(10)DXD motif motif is present at residues 11–25; sequence GSYAKNEYTKRSDID. Asp-23, Asp-25, and Asp-48 together coordinate Mg(2+).

It belongs to the MntA antitoxin family. In terms of assembly, probably forms a complex with cognate toxin MJ1548. Mg(2+) is required as a cofactor.

It catalyses the reaction L-tyrosyl-[protein] + ATP = O-(5'-adenylyl)-L-tyrosyl-[protein] + diphosphate. The enzyme catalyses O-(5'-adenylyl)-L-tyrosyl-[protein] + ATP = O-[5'-(adenylyl-(5'-&gt;3')-adenylyl)]-L-tyrosyl-[protein] + diphosphate. Functionally, probable antitoxin component of a putative type VII toxin-antitoxin (TA) system. Neutralizes cognate toxic MJ1548 by di-AMPylation. The protein is Putative protein adenylyltransferase MJ1547 of Methanocaldococcus jannaschii (strain ATCC 43067 / DSM 2661 / JAL-1 / JCM 10045 / NBRC 100440) (Methanococcus jannaschii).